Consider the following 675-residue polypeptide: DNA ligase (675 aa).

Residues 33 to 37, 82 to 83, and Glu-114 contribute to the NAD(+) site; these read DAEYD and SL. The active-site N6-AMP-lysine intermediate is Lys-116. NAD(+) contacts are provided by Arg-137, Glu-174, Lys-291, and Lys-315. Zn(2+)-binding residues include Cys-409, Cys-412, Cys-427, and Cys-433. The region spanning 595–675 is the BRCT domain; that stretch reads AGDNPFAGKT…EMIRLLDQSK (81 aa).

The protein belongs to the NAD-dependent DNA ligase family. LigA subfamily. The cofactor is Mg(2+). It depends on Mn(2+) as a cofactor.

The enzyme catalyses NAD(+) + (deoxyribonucleotide)n-3'-hydroxyl + 5'-phospho-(deoxyribonucleotide)m = (deoxyribonucleotide)n+m + AMP + beta-nicotinamide D-nucleotide.. Its function is as follows. DNA ligase that catalyzes the formation of phosphodiester linkages between 5'-phosphoryl and 3'-hydroxyl groups in double-stranded DNA using NAD as a coenzyme and as the energy source for the reaction. It is essential for DNA replication and repair of damaged DNA. The protein is DNA ligase of Proteus mirabilis (strain HI4320).